We begin with the raw amino-acid sequence, 456 residues long: tRNA modification GTPase MnmE (456 aa).

The (6S)-5-formyl-5,6,7,8-tetrahydrofolate site is built by arginine 25, glutamate 82, and lysine 121. Residues 217 to 379 (GIKVVIIGKP…LLDEIVKIAG (163 aa)) enclose the TrmE-type G domain. Position 227 (asparagine 227) interacts with K(+). GTP contacts are provided by residues 227–232 (NAGKSS), 246–252 (TDIAGTT), and 271–274 (DTAG). Mg(2+) is bound at residue serine 231. Residues threonine 246, isoleucine 248, and threonine 251 each coordinate K(+). Threonine 252 is a binding site for Mg(2+). Position 456 (lysine 456) interacts with (6S)-5-formyl-5,6,7,8-tetrahydrofolate.

The protein belongs to the TRAFAC class TrmE-Era-EngA-EngB-Septin-like GTPase superfamily. TrmE GTPase family. Homodimer. Heterotetramer of two MnmE and two MnmG subunits. It depends on K(+) as a cofactor.

The protein localises to the cytoplasm. Functionally, exhibits a very high intrinsic GTPase hydrolysis rate. Involved in the addition of a carboxymethylaminomethyl (cmnm) group at the wobble position (U34) of certain tRNAs, forming tRNA-cmnm(5)s(2)U34. In Endomicrobium trichonymphae, this protein is tRNA modification GTPase MnmE.